Here is a 355-residue protein sequence, read N- to C-terminus: Serum paraoxonase/arylesterase 1 (355 aa).

C42 and C353 are joined by a disulfide. Ca(2+) contacts are provided by E53 and D54. The Proton acceptor role is filled by H115. Ca(2+)-binding residues include I117, N168, D169, and N224. Residue N253 is glycosylated (N-linked (GlcNAc...) asparagine). Ca(2+) is bound by residues D269 and N270. N-linked (GlcNAc...) asparagine glycosylation is found at N270 and N324.

The protein belongs to the paraoxonase family. As to quaternary structure, homodimer. Heterooligomer with phosphate-binding protein (HPBP). Interacts with CLU. It depends on Ca(2+) as a cofactor. Glycosylated. In terms of processing, the signal sequence is not cleaved. Post-translationally, present in two forms, form B contains a disulfide bond, form A does not. As to expression, plasma, associated with HDL (at protein level). Expressed in liver, but not in heart, brain, placenta, lung, skeletal muscle, kidney or pancreas.

The protein resides in the secreted. It localises to the extracellular space. The enzyme catalyses a phenyl acetate + H2O = a phenol + acetate + H(+). It catalyses the reaction An aryl dialkyl phosphate + H2O = dialkyl phosphate + an aryl alcohol.. It carries out the reaction an N-acyl-L-homoserine lactone + H2O = an N-acyl-L-homoserine + H(+). Functionally, hydrolyzes the toxic metabolites of a variety of organophosphorus insecticides. Capable of hydrolyzing a broad spectrum of organophosphate substrates and lactones, and a number of aromatic carboxylic acid esters. Mediates an enzymatic protection of low density lipoproteins against oxidative modification and the consequent series of events leading to atheroma formation. The protein is Serum paraoxonase/arylesterase 1 (PON1) of Homo sapiens (Human).